Consider the following 543-residue polypeptide: MKRVKKLWGMGLALGLSFALMGCTANEQAGKEGSHDKAKTSGEKVLYVNNENEPTSFDPPIGFNNVSWQPLNNIMEGLTRLGKDHEPEPAMAEKWSVSKDNKTYTFTIRENAKWTNGDPVTAGDFEYAWKRMLDPKKGASSAFLGYFIEGGEAYNSGKGKKDDVKVTAKDDRTLEVTLEAPQKYFLSVVSNPAYFPVNEKVDKDNPKWFAESDTFVGNGPFKLTEWKHDDSITMEKSDTYWDKDTVKLDKVKWAMVSDRNTDYQMFQSGELDTAYVPAELSDQLLDQDNVNIVDQAGLYFYRFNVNMEPFQNENIRKAFAMAVDQEEIVKYVTKNNEKPAHAFVSPGFTQPDGKDFREAGGDLIKPNESKAKQLLEKGMKEENYNKLPAITLTYSTKPEHKKIAEAIQQKLKNSLGVDVKLANMEWNVFLEDQKALKFQFSQSSFLPDYADPISFLEAFQTGNSMNRTGWANKEYDQLIKQAKNEADEKTRFSLMHQAEELLINEAPIIPVYFYNQVHLQNEQVKGIVRHPVGYIDLKWADKN.

The signal sequence occupies residues 1 to 22 (MKRVKKLWGMGLALGLSFALMG). A lipid anchor (N-palmitoyl cysteine) is attached at Cys23. A lipid anchor (S-diacylglycerol cysteine) is attached at Cys23.

This sequence belongs to the bacterial solute-binding protein 5 family.

The protein localises to the cell membrane. In terms of biological role, probably part of the ABC transporter DppBCDE involved in dipeptide transport. The sequence is that of Dipeptide-binding protein DppE (dppE) from Bacillus subtilis (strain 168).